The following is a 218-amino-acid chain: Probable nicotinate-nucleotide adenylyltransferase (218 aa).

It belongs to the NadD family.

It carries out the reaction nicotinate beta-D-ribonucleotide + ATP + H(+) = deamido-NAD(+) + diphosphate. It participates in cofactor biosynthesis; NAD(+) biosynthesis; deamido-NAD(+) from nicotinate D-ribonucleotide: step 1/1. Functionally, catalyzes the reversible adenylation of nicotinate mononucleotide (NaMN) to nicotinic acid adenine dinucleotide (NaAD). This Sodalis glossinidius (strain morsitans) protein is Probable nicotinate-nucleotide adenylyltransferase.